Reading from the N-terminus, the 483-residue chain is Altronate oxidoreductase (483 aa).

18–29 contacts NAD(+); that stretch reads IIQFGEGNFLRA.

The protein belongs to the mannitol dehydrogenase family. UxaB subfamily.

It catalyses the reaction D-altronate + NAD(+) = keto-D-tagaturonate + NADH + H(+). Its pathway is carbohydrate metabolism; pentose and glucuronate interconversion. In Escherichia coli O157:H7, this protein is Altronate oxidoreductase (uxaB).